The sequence spans 109 residues: uncharacterized protein (109 aa).

This is an uncharacterized protein from Bos taurus (Bovine).